The primary structure comprises 165 residues: MSVNMEELRHQVMINQFVLAAGCAADQAKQLLQAAHWQFETALSAFFQESNVASAQHHQHMMCTPSNTPATPPNFPDALAMFSKLRTSESLQNSSSPASNACSPPGNFNPYWASSPPNQQPVWLPPASPTAHLHHHHHHPQPVWPPNSQPTGGPQKAMAAMDGQR.

A disordered region spans residues 119 to 165 (QQPVWLPPASPTAHLHHHHHHPQPVWPPNSQPTGGPQKAMAAMDGQR).

This sequence belongs to the UBALD family.

This Xenopus laevis (African clawed frog) protein is UBA-like domain-containing protein 2-B (ubald2-b).